Here is a 272-residue protein sequence, read N- to C-terminus: Acidic leucine-rich nuclear phosphoprotein 32 family member B (272 aa).

LRR repeat units lie at residues 18–38 (AVRE…EGLT), 43–64 (NLEF…PKLP), 65–87 (KLKK…AEEL), and 89–110 (SLTH…EPLK). Residues 123 to 161 (CEVTNRSDYRETVFRLLPQLSYLDGYDREDQEAPDSDVE) enclose the LRRCT domain. Acidic residues predominate over residues 149-254 (DREDQEAPDS…DEDEDEEEEE (106 aa)). The interval 149 to 272 (DREDQEAPDS…RETDDEGEDD (124 aa)) is disordered. Ser164 and Ser171 each carry phosphoserine. Over residues 255–265 (SGKGEKRKRET) the composition is skewed to basic and acidic residues. The Nuclear localization signal motif lies at 260 to 263 (KRKR). Phosphothreonine is present on Thr265.

The protein belongs to the ANP32 family. In terms of assembly, interacts with histones H3 and H4. Interacts with KLF5; this interaction induces promoter region-specific histone incorporation and inhibition of histone acetylation by ANP32B. In terms of processing, some glutamate residues are glycylated by TTLL8. This modification occurs exclusively on glutamate residues and results in a glycine chain on the gamma-carboxyl group. Directly cleaved by caspase-3/CASP3.

The protein localises to the nucleus. In terms of biological role, multifunctional protein that is involved in the regulation of many processes including cell proliferation, apoptosis, cell cycle progression or transcription. Regulates the proliferation of neuronal stem cells, differentiation of leukemic cells and progression from G1 to S phase of the cell cycle. As negative regulator of caspase-3-dependent apoptosis, may act as an antagonist of ANP32A in regulating tissue homeostasis. Exhibits histone chaperone properties, able to recruit histones to certain promoters, thus regulating the transcription of specific genes. Also plays an essential role in the nucleocytoplasmic transport of specific mRNAs via the uncommon nuclear mRNA export receptor XPO1/CRM1. Participates in the regulation of adequate adaptive immune responses by acting on mRNA expression and cell proliferation. This Mus musculus (Mouse) protein is Acidic leucine-rich nuclear phosphoprotein 32 family member B (Anp32b).